An 89-amino-acid polypeptide reads, in one-letter code: MALEKDEKTAIIADYQMHSTDTGSPQVQVALLTERINGLIEHLKVHPHDHHSRRGLLKLVGRRRRLLAYLASRDKEAYRKLIDTLGLRR.

Belongs to the universal ribosomal protein uS15 family. Part of the 30S ribosomal subunit. Forms a bridge to the 50S subunit in the 70S ribosome, contacting the 23S rRNA.

One of the primary rRNA binding proteins, it binds directly to 16S rRNA where it helps nucleate assembly of the platform of the 30S subunit by binding and bridging several RNA helices of the 16S rRNA. Its function is as follows. Forms an intersubunit bridge (bridge B4) with the 23S rRNA of the 50S subunit in the ribosome. The polypeptide is Small ribosomal subunit protein uS15 (Roseiflexus sp. (strain RS-1)).